Reading from the N-terminus, the 427-residue chain is 11-beta-hydroxysteroid dehydrogenase type 2 (427 aa).

82–111 (TRAVLITGCDSGFGNATAKKLDAMGFTVLA) is a binding site for NAD(+). Ser219 contacts substrate. Tyr232 (proton acceptor) is an active-site residue.

The protein belongs to the short-chain dehydrogenases/reductases (SDR) family. Interacts with ligand-free cytoplasmic NR3C2. Highly expressed in the kidney and adrenal and at lower levels in the colon.

It is found in the microsome. Its subcellular location is the endoplasmic reticulum. The catalysed reaction is an 11beta-hydroxysteroid + NAD(+) = an 11-oxosteroid + NADH + H(+). It carries out the reaction corticosterone + NAD(+) = 11-dehydrocorticosterone + NADH + H(+). The enzyme catalyses cortisol + NAD(+) = cortisone + NADH + H(+). It catalyses the reaction 11beta,17beta-dihydroxyandrost-4-ene-3-one + NAD(+) = 17beta-hydroxyandrost-4-ene-3,11-dione + NADH + H(+). The catalysed reaction is 11beta-hydroxyandrost-4-ene-3,17-dione + NAD(+) = androst-4-ene-3,11,17-trione + NADH + H(+). It functions in the pathway steroid metabolism. Its activity is regulated as follows. Inhibited by glycyrrhetinic acid, carbenoloxone, 11-alpha-OH-progesterone and 11-beta-OH-progesterone. Catalyzes the conversion of biologically active 11beta-hydroxyglucocorticoids (11beta-hydroxysteroid) such as cortisol, to inactive 11-ketoglucocorticoids (11-oxosteroid) such as cortisone, in the presence of NAD(+). Functions as a dehydrogenase (oxidase), thereby decreasing the concentration of active glucocorticoids, thus protecting the nonselective mineralocorticoid receptor from occupation by glucocorticoids. Plays an important role in maintaining glucocorticoids balance during preimplantation and protects the fetus from excessive maternal corticosterone exposure. Catalyzes the oxidation of 11beta-hydroxytestosterone (11beta,17beta-dihydroxyandrost-4-ene-3-one) to 11-ketotestosterone (17beta-hydroxyandrost-4-ene-3,11-dione), a major bioactive androgen. Catalyzes the conversion of 11beta-hydroxyandrostenedione (11beta-hydroxyandrost-4-ene-3,17-dione) to 11-ketoandrostenedione (androst-4-ene-3,11,17-trione), which can be further metabolized to 11-ketotestosterone. Converts 7-beta-25-dihydroxycholesterol to 7-oxo-25-hydroxycholesterol in vitro. 7-beta-25-dihydroxycholesterol (not 7-oxo-25-hydroxycholesterol) acts as a ligand for the G-protein-coupled receptor (GPCR) Epstein-Barr virus-induced gene 2 (EBI2) and may thereby regulate immune cell migration. May protect ovulating oocytes and fertilizing spermatozoa from the adverse effects of cortisol. The polypeptide is 11-beta-hydroxysteroid dehydrogenase type 2 (HSD11B2) (Ovis aries (Sheep)).